The following is a 121-amino-acid chain: Large ribosomal subunit protein uL18 (121 aa).

The protein belongs to the universal ribosomal protein uL18 family. Part of the 50S ribosomal subunit; part of the 5S rRNA/L5/L18/L25 subcomplex. Contacts the 5S and 23S rRNAs.

This is one of the proteins that bind and probably mediate the attachment of the 5S RNA into the large ribosomal subunit, where it forms part of the central protuberance. The chain is Large ribosomal subunit protein uL18 from Spiroplasma kunkelii.